Here is a 549-residue protein sequence, read N- to C-terminus: Undecaprenyl phosphate-alpha-4-amino-4-deoxy-L-arabinose arabinosyl transferase 1 (549 aa).

12 helical membrane passes run 9–29, 80–102, 112–132, 133–153, 176–196, 204–224, 257–277, 290–310, 312–332, 342–362, 377–397, and 402–422; these read LLLIAFGLFYLLPLATHGLWI, LFGVRVASALSTGLSVVLAYLLA, SLASALLYMSFTVVALQAGYA, NLDPQFTFWVNLSLVALWFTF, FMTKGFLAWLLPVLVALPYAI, LLIYGGIGVLVAILISLPWAL, WWYYLPLLVGFSVPWVLLLPA, SSGFLLLWLVLPLAFFSLSKG, LPAYILPCLLPLALLMGNTLV, LLAFNGVLNLVAGLLGLLALV, HLVLVYVLLLGWILSNLLQAM, and LWAAPALGSFLLVALAPAALP.

The protein belongs to the glycosyltransferase 83 family.

It is found in the cell inner membrane. It catalyses the reaction 4-amino-4-deoxy-alpha-L-arabinopyranosyl di-trans,octa-cis-undecaprenyl phosphate + lipid IVA = lipid IIA + di-trans,octa-cis-undecaprenyl phosphate.. It participates in lipopolysaccharide metabolism; 4-amino-4-deoxy-beta-L-arabinose-lipid A biosynthesis. In terms of biological role, catalyzes the transfer of the L-Ara4N moiety of the glycolipid undecaprenyl phosphate-alpha-L-Ara4N to lipid A. The modified arabinose is attached to lipid A and is required for resistance to polymyxin and cationic antimicrobial peptides. This is Undecaprenyl phosphate-alpha-4-amino-4-deoxy-L-arabinose arabinosyl transferase 1 from Pseudomonas fluorescens (strain ATCC BAA-477 / NRRL B-23932 / Pf-5).